The following is a 284-amino-acid chain: Four and a half LIM domains protein 5 (284 aa).

The C4-type zinc-finger motif lies at 8-32; sequence CQYCTASLLGKKYVLKDDSPYCVTC. LIM zinc-binding domains lie at 39-100, 101-160, 161-220, and 223-283; these read NYCE…ECSS, KCFH…KEFA, HYCN…LYAN, and VACS…MDTD.

Interacts with CREM (via the third LIM domain). Interacts (via second LIM domain) with SPAG8. In terms of tissue distribution, testis-specific (at protein level).

It localises to the nucleus. Its function is as follows. May be involved in the regulation of spermatogenesis. Stimulates CREM transcriptional activity in a phosphorylation-independent manner. This is Four and a half LIM domains protein 5 (FHL5) from Homo sapiens (Human).